Here is a 94-residue protein sequence, read N- to C-terminus: Cell division topological specificity factor (94 aa).

This sequence belongs to the MinE family.

Functionally, prevents the cell division inhibition by proteins MinC and MinD at internal division sites while permitting inhibition at polar sites. This ensures cell division at the proper site by restricting the formation of a division septum at the midpoint of the long axis of the cell. The protein is Cell division topological specificity factor of Alkaliphilus metalliredigens (strain QYMF).